Here is a 113-residue protein sequence, read N- to C-terminus: Integration host factor subunit alpha (113 aa).

A disordered region spans residues 87-113 (NALNGEVSDETTEGADDDDDEEGEGDE). A compositionally biased stretch (acidic residues) spans 93–113 (VSDETTEGADDDDDEEGEGDE).

It belongs to the bacterial histone-like protein family. In terms of assembly, heterodimer of an alpha and a beta chain.

In terms of biological role, this protein is one of the two subunits of integration host factor, a specific DNA-binding protein that functions in genetic recombination as well as in transcriptional and translational control. This is Integration host factor subunit alpha from Anaeromyxobacter dehalogenans (strain 2CP-1 / ATCC BAA-258).